A 332-amino-acid polypeptide reads, in one-letter code: L-lactate dehydrogenase A chain (332 aa).

Position 5 is an N6-acetyllysine; alternate (Lys5). Lys5 carries the N6-succinyllysine; alternate modification. The residue at position 14 (Lys14) is an N6-acetyllysine. At Thr18 the chain carries Phosphothreonine. 29–57 (GAVGMACAISILMKDLADELALVDVIEDK) contacts NAD(+). Residue Lys57 is modified to N6-acetyllysine; alternate. A Glycyl lysine isopeptide (Lys-Gly) (interchain with G-Cter in SUMO2); alternate cross-link involves residue Lys57. Lys81 carries the N6-acetyllysine modification. NAD(+) is bound at residue Arg99. Arg106 provides a ligand contact to substrate. N6-acetyllysine; alternate is present on Lys118. Lys118 is modified (N6-succinyllysine; alternate). Residue Lys126 is modified to N6-acetyllysine. NAD(+) is bound at residue Asn138. The substrate site is built by Asn138 and Arg169. His193 functions as the Proton acceptor in the catalytic mechanism. An N6-acetyllysine modification is found at Lys232. At Tyr239 the chain carries Phosphotyrosine. Lys243 is subject to N6-acetyllysine. Thr248 is a substrate binding site. Residues Thr309 and Thr322 each carry the phosphothreonine modification.

This sequence belongs to the LDH/MDH superfamily. LDH family. As to quaternary structure, homotetramer. Interacts with PTEN upstream reading frame protein MP31. Post-translationally, ISGylated.

The protein localises to the cytoplasm. The enzyme catalyses (S)-lactate + NAD(+) = pyruvate + NADH + H(+). Its pathway is fermentation; pyruvate fermentation to lactate; (S)-lactate from pyruvate: step 1/1. Its function is as follows. Interconverts simultaneously and stereospecifically pyruvate and lactate with concomitant interconversion of NADH and NAD(+). The sequence is that of L-lactate dehydrogenase A chain (LDHA) from Monodelphis domestica (Gray short-tailed opossum).